The chain runs to 296 residues: MTKKQLHLVIVTGMSGAGKTVAIQSFEDLGYFTIDNMPPALLPKFLQLVEIKEDNPKLALVVDMRSRSFFSEIQAVLDELENQDGLDFKILFLDAADKELVARYKETRRSHPLAADGRILDGIKLERELLAPLKNMSQNVVDTTELTPRELRKTLAEQFSDQEQAQSFRIEVMSFGFKYGIPIDADLVFDVRFLPNPYYLPELRNQTGVDEPVYDYVMNHPESEDFYQHLLALIEPILPSYQKEGKSVLTIAMGCTGGQHRSVAFAKRLVQDLSKNWSVNEGHRDKDRRKETVNRS.

13–20 (GMSGAGKT) lines the ATP pocket. 63 to 66 (DMRS) is a binding site for GTP.

It belongs to the RapZ-like family.

Displays ATPase and GTPase activities. The polypeptide is Nucleotide-binding protein SPCG_1551 (Streptococcus pneumoniae (strain CGSP14)).